A 153-amino-acid chain; its full sequence is Neuromedin-S (153 aa).

A signal peptide spans 1-26 (MKHLRPQFPLILAIYCFCMLQIPSSG). Propeptides lie at residues 27–69 (FPQP…IYKR), 70–105 (FLFH…ANRR), and 106–108 (MKR). Asn-141 is modified (asparagine amide). Positions 144–153 (NIEDEAQIQW) are excised as a propeptide.

Belongs to the NmU family.

Its subcellular location is the secreted. Functionally, implicated in the regulation of circadian rhythms through autocrine and/or paracrine actions. The chain is Neuromedin-S (NMS) from Homo sapiens (Human).